A 662-amino-acid chain; its full sequence is UvrABC system protein B (662 aa).

Residues aspartate 31–arginine 188 form the Helicase ATP-binding domain. Residue glycine 44 to threonine 51 coordinates ATP. Positions tyrosine 97–valine 120 match the Beta-hairpin motif. In terms of domain architecture, Helicase C-terminal spans glutamine 435–isoleucine 601. One can recognise a UVR domain in the interval lysine 626–leucine 661.

Belongs to the UvrB family. As to quaternary structure, forms a heterotetramer with UvrA during the search for lesions. Interacts with UvrC in an incision complex.

Its subcellular location is the cytoplasm. Its function is as follows. The UvrABC repair system catalyzes the recognition and processing of DNA lesions. A damage recognition complex composed of 2 UvrA and 2 UvrB subunits scans DNA for abnormalities. Upon binding of the UvrA(2)B(2) complex to a putative damaged site, the DNA wraps around one UvrB monomer. DNA wrap is dependent on ATP binding by UvrB and probably causes local melting of the DNA helix, facilitating insertion of UvrB beta-hairpin between the DNA strands. Then UvrB probes one DNA strand for the presence of a lesion. If a lesion is found the UvrA subunits dissociate and the UvrB-DNA preincision complex is formed. This complex is subsequently bound by UvrC and the second UvrB is released. If no lesion is found, the DNA wraps around the other UvrB subunit that will check the other stand for damage. This is UvrABC system protein B from Streptococcus pneumoniae serotype 2 (strain D39 / NCTC 7466).